Consider the following 112-residue polypeptide: UPF0342 protein STH1710 (112 aa).

This sequence belongs to the UPF0342 family.

This Symbiobacterium thermophilum (strain DSM 24528 / JCM 14929 / IAM 14863 / T) protein is UPF0342 protein STH1710.